The primary structure comprises 691 residues: Putative calcium up-regulated protein I (691 aa).

Residues 47–174 (SNCYLKEKPQ…NYTSQIWTYN (128 aa)) form the Ricin B-type lectin domain.

Belongs to the cup family.

This chain is Putative calcium up-regulated protein I (cupI), found in Dictyostelium discoideum (Social amoeba).